Consider the following 491-residue polypeptide: Glutamyl-tRNA(Gln) amidotransferase subunit A (491 aa).

Catalysis depends on charge relay system residues K77 and S152. S176 functions as the Acyl-ester intermediate in the catalytic mechanism.

The protein belongs to the amidase family. GatA subfamily. As to quaternary structure, heterotrimer of A, B and C subunits.

It carries out the reaction L-glutamyl-tRNA(Gln) + L-glutamine + ATP + H2O = L-glutaminyl-tRNA(Gln) + L-glutamate + ADP + phosphate + H(+). In terms of biological role, allows the formation of correctly charged Gln-tRNA(Gln) through the transamidation of misacylated Glu-tRNA(Gln) in organisms which lack glutaminyl-tRNA synthetase. The reaction takes place in the presence of glutamine and ATP through an activated gamma-phospho-Glu-tRNA(Gln). This chain is Glutamyl-tRNA(Gln) amidotransferase subunit A, found in Chlamydia felis (strain Fe/C-56) (Chlamydophila felis).